A 275-amino-acid polypeptide reads, in one-letter code: Dermonecrotic toxin SpeSicTox-betaIIA2ii (275 aa).

Residue His-5 is part of the active site. Mg(2+)-binding residues include Glu-25 and Asp-27. The active-site Nucleophile is the His-41. 2 disulfide bridges follow: Cys-45/Cys-51 and Cys-47/Cys-190. Asp-85 contacts Mg(2+).

Belongs to the arthropod phospholipase D family. Class II subfamily. It depends on Mg(2+) as a cofactor. Expressed by the venom gland.

Its subcellular location is the secreted. It carries out the reaction an N-(acyl)-sphingosylphosphocholine = an N-(acyl)-sphingosyl-1,3-cyclic phosphate + choline. The catalysed reaction is an N-(acyl)-sphingosylphosphoethanolamine = an N-(acyl)-sphingosyl-1,3-cyclic phosphate + ethanolamine. It catalyses the reaction a 1-acyl-sn-glycero-3-phosphocholine = a 1-acyl-sn-glycero-2,3-cyclic phosphate + choline. The enzyme catalyses a 1-acyl-sn-glycero-3-phosphoethanolamine = a 1-acyl-sn-glycero-2,3-cyclic phosphate + ethanolamine. Functionally, dermonecrotic toxins cleave the phosphodiester linkage between the phosphate and headgroup of certain phospholipids (sphingolipid and lysolipid substrates), forming an alcohol (often choline) and a cyclic phosphate. This toxin acts on sphingomyelin (SM). It may also act on ceramide phosphoethanolamine (CPE), lysophosphatidylcholine (LPC) and lysophosphatidylethanolamine (LPE), but not on lysophosphatidylserine (LPS), and lysophosphatidylglycerol (LPG). It acts by transphosphatidylation, releasing exclusively cyclic phosphate products as second products. Induces dermonecrosis, hemolysis, increased vascular permeability, edema, inflammatory response, and platelet aggregation. This is Dermonecrotic toxin SpeSicTox-betaIIA2ii from Sicarius peruensis (Six-eyed sand spider).